The following is an 808-amino-acid chain: Potassium transporter 5 (808 aa).

At 1-65 the chain is on the cytoplasmic side; that stretch reads MAEEVGETRG…NQVNWKKTLS (65 aa). A helical membrane pass occupies residues 66 to 86; it reads LTFQSIGVVYGDIGTSPLYVY. Over 87-102 the chain is Extracellular; the sequence is ESTFPDKIGSKEDILG. Residues 103–123 form a helical membrane-spanning segment; it reads VLSLIIYTLVLLPMLKYVFIV. Topologically, residues 124-189 are cytoplasmic; it reads LRANDNGDGG…EKMENSKNIK (66 aa). A helical membrane pass occupies residues 190 to 210; sequence ILLFLVTILGTSMVIGDGVLT. Topologically, residues 211-221 are extracellular; it reads PCISVLSAVSG. The chain crosses the membrane as a helical span at residues 222–242; sequence IGSLGQDAVVGISIAILIVLF. Residues 243–251 lie on the Cytoplasmic side of the membrane; the sequence is CAQRLGTDK. Residues 252–272 traverse the membrane as a helical segment; sequence VGFSFAPIILLWFSFIGGIGL. Over 273-302 the chain is Extracellular; the sequence is YNLFKYDVSVLRAFNPKYMFDYFKRNGKQG. The helical transmembrane segment at 303 to 323 threads the bilayer; sequence WISLGGVVLAVTGTEAMFADL. At 324 to 327 the chain is on the cytoplasmic side; that stretch reads GHFN. Residues 328-348 form a helical membrane-spanning segment; that stretch reads VQAIQISFSGIVFPALLCAYA. At 349 to 379 the chain is on the extracellular side; that stretch reads GQAAYLTKFPDDVSKTFYKSIPDPLYWPTFV. Residues 380 to 400 form a helical membrane-spanning segment; it reads VAVAAAIIASQAMISGAFAII. At 401–424 the chain is on the cytoplasmic side; that stretch reads SQSLSLGCFPRVKVIHTSAKYEGQ. A helical membrane pass occupies residues 425 to 445; the sequence is VYIPEVNYILMIACIMVCLGF. The Extracellular segment spans residues 446–456; sequence KTTEKIGNAYG. Residues 457-477 form a helical membrane-spanning segment; that stretch reads IAVVAVMVITTCMVTIIMLVV. Over 478–482 the chain is Cytoplasmic; it reads WRTKM. The chain crosses the membrane as a helical span at residues 483 to 503; sequence IWIAFFFFGFICIEAVYLSSV. Residues 504–510 are Extracellular-facing; sequence LYKFKDG. A helical transmembrane segment spans residues 511 to 531; the sequence is GFLPLAFSFFLMIIMGIWHYI. The Cytoplasmic portion of the chain corresponds to 532–808; it reads HKERYMYELK…LLRVGMTYEI (277 aa). The disordered stretch occupies residues 699 to 722; sequence LQQPNPSRVSSGSIHSNSGIKSTK.

The protein belongs to the HAK/KUP transporter (TC 2.A.72.3) family. As to expression, expressed in the roots.

It localises to the cell membrane. The enzyme catalyses K(+)(in) = K(+)(out). Functionally, high-affinity potassium transporter that functions under low potassium conditions. Involved in the positive regulation of salt tolerance under salt stress. In Manihot esculenta (Cassava), this protein is Potassium transporter 5.